Reading from the N-terminus, the 247-residue chain is Coproheme decarboxylase (247 aa).

Residues R129, 143 to 147 (YPMDK), H170, Q183, and S221 contribute to the Fe-coproporphyrin III site. Y143 is a catalytic residue.

It belongs to the ChdC family. Type 1 subfamily. Fe-coproporphyrin III is required as a cofactor.

It catalyses the reaction Fe-coproporphyrin III + 2 H2O2 + 2 H(+) = heme b + 2 CO2 + 4 H2O. The catalysed reaction is Fe-coproporphyrin III + H2O2 + H(+) = harderoheme III + CO2 + 2 H2O. The enzyme catalyses harderoheme III + H2O2 + H(+) = heme b + CO2 + 2 H2O. Its pathway is porphyrin-containing compound metabolism; protoheme biosynthesis. Functionally, involved in coproporphyrin-dependent heme b biosynthesis. Catalyzes the decarboxylation of Fe-coproporphyrin III (coproheme) to heme b (protoheme IX), the last step of the pathway. The reaction occurs in a stepwise manner with a three-propionate intermediate. The polypeptide is Coproheme decarboxylase (Bacillus anthracis).